A 380-amino-acid chain; its full sequence is N-acetylcysteine deacetylase (380 aa).

Positions 98, 100, 134, 158, and 350 each coordinate Ni(2+).

This sequence belongs to the peptidase M20 family. A divalent metal cation is required as a cofactor.

It carries out the reaction N-acetyl-L-cysteine + H2O = L-cysteine + acetate. It participates in amino-acid biosynthesis; L-cysteine biosynthesis. Its function is as follows. Probably catalyzes the deacetylation of N-acetylcysteine (NAC) to acetate and cysteine. Is involved in a S-(2-succino)cysteine (2SC) degradation pathway that allows B.subtilis to grow on 2SC as a sole sulfur source, via its metabolization to cysteine. The protein is N-acetylcysteine deacetylase of Bacillus subtilis (strain 168).